Consider the following 387-residue polypeptide: GDP-mannose transporter (387 aa).

The segment covering 1-25 has biased composition (basic and acidic residues); the sequence is MADTKKNDNYAIDMDKLDAESDRFR. The Cytoplasmic portion of the chain corresponds to 1–42; the sequence is MADTKKNDNYAIDMDKLDAESDRFRPPPQPQPRHSSSSHSQS. The disordered stretch occupies residues 1–45; it reads MADTKKNDNYAIDMDKLDAESDRFRPPPQPQPRHSSSSHSQSISN. A compositionally biased stretch (low complexity) spans 32–45; the sequence is PRHSSSSHSQSISN. Residues 43-63 form a helical membrane-spanning segment; it reads ISNSPVLPILSYCASSILMTV. Residues 64–71 are Lumenal-facing; sequence TNKYVLSG. The chain crosses the membrane as a helical span at residues 72-92; it reads VQFNLNFFLLCVQSVVCIIAI. Over 93–112 the chain is Cytoplasmic; the sequence is QTCKSMGLINYRDFNSDEAK. Residues 113 to 129 traverse the membrane as a helical segment; the sequence is KWFPISLLLIGMIYTGT. Residues 130–136 lie on the Lumenal side of the membrane; that stretch reads KALKFLS. Residues 137-153 form a helical membrane-spanning segment; sequence IPVYTIFKNLTIILIAY. The Cytoplasmic portion of the chain corresponds to 154-162; that stretch reads GEVLWFGGS. Residues 163–184 form a helical membrane-spanning segment; the sequence is VTGMALFSFGLMVLSSVIAAWA. Topologically, residues 185–206 are lumenal; the sequence is DIKHALDTSGFSGAEATSKIST. The chain crosses the membrane as a helical span at residues 207–227; that stretch reads LNAGYIWMLINCLCTSTYILG. The Cytoplasmic segment spans residues 228–241; it reads MRKRIKLTNFKDFD. A helical transmembrane segment spans residues 242–262; sequence TMFYNNLLSIPILMIGSFIVE. Over 263 to 280 the chain is Lumenal; it reads DWSSENINKNFPIETRNS. A helical transmembrane segment spans residues 281 to 301; that stretch reads LIFAMIFSGLSSVFISYTSAW. The Cytoplasmic segment spans residues 302–309; that stretch reads CVRVTSST. Residues 310–329 traverse the membrane as a helical segment; that stretch reads TYSMVGALNKLPIALSGLIF. Topologically, residues 330–332 are lumenal; it reads FGD. A helical membrane pass occupies residues 333–355; the sequence is PVTVPSVSAIVVGFISGIVYSLA. Residues 356–387 lie on the Cytoplasmic side of the membrane; it reads KVKQNAKPRTGVLPTTNPVSASTQSMRDGLKS. Positions 366-387 are disordered; it reads GVLPTTNPVSASTQSMRDGLKS. Polar residues predominate over residues 368–381; it reads LPTTNPVSASTQSM.

It belongs to the TPT transporter family. SLC35D subfamily. As to quaternary structure, homooligomer.

The protein resides in the golgi apparatus membrane. It is found in the cytoplasmic vesicle membrane. The protein localises to the endoplasmic reticulum membrane. Functionally, involved in the import of GDP-mannose from the cytoplasm into the Golgi lumen. This Coccidioides immitis (strain RS) (Valley fever fungus) protein is GDP-mannose transporter (VRG4).